We begin with the raw amino-acid sequence, 175 residues long: Major spike protein G (175 aa).

Belongs to the microvirus G protein family. As to quaternary structure, pentamerizes and interacts with H protein, F and B pentamers to form 12S pre-assembly complex. Joining of twelve 12S complex form the procapsid.

It is found in the virion. Its subcellular location is the host cytoplasm. In terms of biological role, attaches the circulating virion to the bacterial lipopolysaccharides which serve as receptor for the virus. Determines the phage host-range. Probably triggers with protein H the injection of the phage DNA into the host cytoplasm upon conformational changes induced by the interaction with host lipopolysaccharides. In Escherichia coli C (Isolate Sanger), this protein is Major spike protein G (G).